The primary structure comprises 236 residues: tRNA (guanine-N(7)-)-methyltransferase (236 aa).

S-adenosyl-L-methionine-binding residues include Asp35, Glu60, Asn87, and Asp113. Asp113 is an active-site residue. The substrate site is built by Lys117 and Asp149.

The protein belongs to the class I-like SAM-binding methyltransferase superfamily. TrmB family.

The catalysed reaction is guanosine(46) in tRNA + S-adenosyl-L-methionine = N(7)-methylguanosine(46) in tRNA + S-adenosyl-L-homocysteine. The protein operates within tRNA modification; N(7)-methylguanine-tRNA biosynthesis. Functionally, catalyzes the formation of N(7)-methylguanine at position 46 (m7G46) in tRNA. The sequence is that of tRNA (guanine-N(7)-)-methyltransferase from Prochlorococcus marinus (strain MIT 9313).